Consider the following 122-residue polypeptide: Elsinochromes biosynthesis cluster protein HP4 (122 aa).

Its function is as follows. Part of the gene cluster that mediates the biosynthesis of elsinochromes, pigments consisting of at least four interconvertible tautomers (A, B, C and D) that have a core phenolic quinone to which various side chains are attached and which play an important role in fungal pathogenesis. The non-reducing polyketide synthase PKS1 was proposed to iteratively catalyze decarboxylation between acetyl-CoA and malonyl-CoA subunits for polyketide chain elongation. The released polyketide undergoes cyclization to form an aromatic ring, and proceeds via serial modification steps to produce the heptaketide back- bone of elsinochrome. As elsinochrome has a symmetrical structure, two identical heptaketides are fused to form a core 1,2-dihydrobenzo-perylene ring structure, which can then be successively modified to produce the various derivatives of elsinochrome. Some of these reactions may be cooperatively carried out, at least in part, by the products of RDT1, OXR1 and PKS1. PRF1, embedded within the elsinochrome cluster possibly functions to stabilize some of the biosynthetic enzymes required for elsinochrome production. As prefoldin is a hexamer containing 2 a and 4 b subunits, additional prefoldin subunits, whose coding genes may not immediately link to the elsinochrome biosynthetic gene cluster, are required to fulfill the chaperone function. In addition, no methyltransferase-coding gene exists within the biosynthetic gene cluster, even though elsinochrome has four methyl groups at positions C3, C7, C8 and C12. Apparently, the identified gene cluster does not contain the entire entourage of genes responsible for elsinochrome biosynthesis. Once elsinochrome is synthesized, it must be exported outside the fungal cells, which is probably accomplished by the ECT1 transporter, to avoid toxicity. This is Elsinochromes biosynthesis cluster protein HP4 from Elsinoe fawcettii (Citrus scab fungus).